Consider the following 188-residue polypeptide: Protein crossbronx-like (188 aa).

A UBC core domain is found at 15-174 (KQGYHILAEY…ANQVVKLHCG (160 aa)).

The protein belongs to the ubiquitin-conjugating enzyme family. FTS subfamily.

The protein is Protein crossbronx-like of Drosophila simulans (Fruit fly).